Consider the following 318-residue polypeptide: uncharacterized protein (318 aa).

The protein belongs to the NAD(P)-dependent epimerase/dehydratase family.

This is an uncharacterized protein from Staphylococcus haemolyticus (strain JCSC1435).